Here is a 100-residue protein sequence, read N- to C-terminus: Enhancer of yellow 2 transcription factor (100 aa).

Belongs to the ENY2 family. As to quaternary structure, component of the nuclear pore complex (NPC)-associated AMEX complex (anchoring and mRNA export complex), composed of at least e(y)2 and xmas-2. Component of the SAGA transcription coactivator-HAT complexes, at least composed of Ada2b, e(y)2, Pcaf/Gcn5, Taf10 and Nipped-A/Trrap. Within the SAGA complex, e(y)2, Sgf11, and not/nonstop form an additional subcomplex of SAGA called the DUB module (deubiquitination module). Component of the THO complex, composed of at least e(y)2, HPR1, THO2, THOC5, THOC6 and THOC7. Interacts with e(y)1. Interacts with su(Hw) (via zinc fingers). Interacts with xmas-2; required for localization to the nuclear periphery. Interacts with the nuclear pore complex (NPC).

The protein localises to the nucleus. It localises to the nucleoplasm. The protein resides in the cytoplasm. In terms of biological role, involved in mRNA export coupled transcription activation by association with both the AMEX and the SAGA complexes. The SAGA complex is a multiprotein complex that activates transcription by remodeling chromatin and mediating histone acetylation and deubiquitination. Within the SAGA complex, participates in a subcomplex that specifically deubiquitinates histone H2B. The SAGA complex is recruited to specific gene promoters by activators, where it is required for transcription. Required for nuclear receptor-mediated transactivation. Involved in transcription elongation by recruiting the THO complex onto nascent mRNA. The AMEX complex functions in docking export-competent ribonucleoprotein particles (mRNPs) to the nuclear entrance of the nuclear pore complex (nuclear basket). AMEX participates in mRNA export and accurate chromatin positioning in the nucleus by tethering genes to the nuclear periphery. This is Enhancer of yellow 2 transcription factor from Drosophila persimilis (Fruit fly).